A 365-amino-acid chain; its full sequence is P43 5S RNA-binding protein (365 aa).

9 C2H2-type zinc fingers span residues 15–39 (FRCPAAGCKAVYRKEGKLRDHMAGH), 45–69 (WKCGKKDCGKMFARKRQIQKHMKRH), 75–100 (HSCPTAGCKMTFSTKKSLSRHKLYKH), 106–130 (LKCSVPGCKRSFRKKRALRIHVSEH), 136–160 (SVCDVPGCGWKSTSAAKLAAHHRRH), 163–187 (YRCSYEDCQTVSPTWTALQTHLKKH), 191–213 (LQCAACKKPFKKASALRRHKATH), 220–245 (LPCPRQDCDKIFSTVFNLTHHLRKVH), and 251–275 (HRCPHSNCTRSFAMRESLVRHLVVH).

In terms of assembly, the 42S RNP particle comprises four subunits each of which contains one molecule of 5S RNA, three molecules of tRNA, two molecules of p50 (EF1-alpha) and one molecule of the 5S RNA binding protein 43.

Functionally, p43 is a 5S RNA binding protein which is a major constituent of oocytes and comprises part of a 42S ribonucleoprotein storage particle. This Xenopus borealis (Kenyan clawed frog) protein is P43 5S RNA-binding protein.